Consider the following 209-residue polypeptide: Protein bli-3 (209 aa).

A compositionally biased stretch (polar residues) spans 1 to 11 (MSGQGFSNADT). The interval 1 to 24 (MSGQGFSNADTGNKPADPYKQANL) is disordered.

The chain is Protein bli-3 (bli-3) from Neurospora crassa (strain ATCC 24698 / 74-OR23-1A / CBS 708.71 / DSM 1257 / FGSC 987).